A 606-amino-acid chain; its full sequence is NADH-ubiquinone oxidoreductase chain 5 (606 aa).

15 consecutive transmembrane segments (helical) span residues 3–23, 38–58, 87–107, 124–144, 180–200, 216–236, 244–264, 276–296, 304–323, 328–350, 369–389, 404–424, 460–480, 483–503, and 586–606; these read VINLIPTLTLTSLIILTLPIT, ITKMAVTCAFAISLIPTLLFL, FFSLTFMPIALFITWSIMEFS, LLLFLITMLILVSANNLLQLF, IGDMGFIMMMAWFIIHLNSWE, LLGLLLASAGKSAQFGLHPWL, TPVSALLHSSTMVMAGVFTLI, IQTSTLCLGAITTLFTAICAL, IIALSTSSQLGLMMVTIGIN, AFTHMCTHAFFKAMLFLSSGSII, MPITSTAIIIGSLALTGMPFL, MSYINTWALLITLIAVSMTAS, LILGSIFMGFFISMNTIPHTT, MTMPPHLKFMALAVTLLGFTV, and LMKLYFLSFLLSITLGLLITL.

The protein belongs to the complex I subunit 5 family. In terms of assembly, core subunit of respiratory chain NADH dehydrogenase (Complex I) which is composed of 45 different subunits.

The protein resides in the mitochondrion inner membrane. The enzyme catalyses a ubiquinone + NADH + 5 H(+)(in) = a ubiquinol + NAD(+) + 4 H(+)(out). Functionally, core subunit of the mitochondrial membrane respiratory chain NADH dehydrogenase (Complex I) which catalyzes electron transfer from NADH through the respiratory chain, using ubiquinone as an electron acceptor. Essential for the catalytic activity and assembly of complex I. This is NADH-ubiquinone oxidoreductase chain 5 (MT-ND5) from Elephas maximus (Indian elephant).